The sequence spans 569 residues: TBCC domain-containing protein 1 (569 aa).

Positions 304–435 (PRSHRIVVMS…LEDHMARTGL (132 aa)) constitute a C-CAP/cofactor C-like domain.

Belongs to the TBCC family.

The protein resides in the cytoplasm. Its subcellular location is the cytoskeleton. It localises to the microtubule organizing center. The protein localises to the centrosome. It is found in the spindle pole. Functionally, plays a role in the regulation of centrosome and Golgi apparatus positioning, with consequences on cell shape and cell migration. This chain is TBCC domain-containing protein 1 (Tbccd1), found in Rattus norvegicus (Rat).